The following is a 659-amino-acid chain: MRALVPMVVAATALASPAPALKPRLDDGLARTPQMGWNTYNQYNCFPNESIVHENAQALVDTGLADLGYRYVTIDCGWGVEDRLPNGTITWNPELFPQGFPAMGQYLHDLGLLFGVYGDSGILLCGSPPNITGSLYYEDIDARTFAEWGADSLKYDNCYSDAATNYPNVNYAPSTSPHPRFANMSRYIQAQDRDILFQVCEWGIDFPALWAPEIGHSWRIGNDIIPHWRSIFRTLNQAVPQTDFAGPGQWPDLDMLLVGLDGVLTVPEEQTHFSLWSILKSPLTIGAAIPGMRAESLEILSNADVIAFNQDALGVSAALRRRWSDEGYEVWSGPLEGGRTIAAVINWRDEDREITLDLPDIGLQYAETLQNVWADETVNGVKTSYSSVVEAHGVMLVQLAETVEEGVYPADVFAATNRDVTTFSDVYAITSSPNFVLNITLTEVTAAATNITIITDSSRRPISTSIPAGSSSISTSVSLIAGSNNTITIRNAPPLSSITLSPPEPTYYTGAQDFTLTSPAGAYTCPDAYCLPAGSKIVDLSTESAATAHINSSTSGSKYLEIDYINNEVAFDSSWGWGANSRNLTIKVNDNNPVRLEVPLSGRHSELFGPGLGWWDSGRLGVLTDGWIKGTNELVLSNEGGEGGFTKYAPDVVGIAVYD.

Residues 1–20 (MRALVPMVVAATALASPAPA) form the signal peptide. Residues asparagine 48, asparagine 86, and asparagine 130 are each glycosylated (N-linked (GlcNAc...) asparagine). A disulfide bond links cysteine 125 and cysteine 158. Aspartate 156 functions as the Nucleophile in the catalytic mechanism. Asparagine 183 carries an N-linked (GlcNAc...) asparagine glycan. 201-205 (EWGID) contacts substrate. The Proton donor role is filled by aspartate 223. Residues asparagine 438, asparagine 450, asparagine 484, asparagine 551, and asparagine 583 are each glycosylated (N-linked (GlcNAc...) asparagine).

This sequence belongs to the glycosyl hydrolase 27 family.

It is found in the secreted. It catalyses the reaction Hydrolysis of terminal, non-reducing alpha-D-galactose residues in alpha-D-galactosides, including galactose oligosaccharides, galactomannans and galactolipids.. Functionally, hydrolyzes a variety of simple alpha-D-galactoside as well as more complex molecules such as oligosaccharides and polysaccharides. Active on paranitrophenyl-alpha-galactoside but not on raffinose, locust bean gum and gum guar. The sequence is that of Alpha-galactosidase D (aglD) from Emericella nidulans (strain FGSC A4 / ATCC 38163 / CBS 112.46 / NRRL 194 / M139) (Aspergillus nidulans).